We begin with the raw amino-acid sequence, 258 residues long: Acyl-[acyl-carrier-protein]--UDP-N-acetylglucosamine O-acyltransferase (258 aa).

It belongs to the transferase hexapeptide repeat family. LpxA subfamily. In terms of assembly, homotrimer.

The protein localises to the cytoplasm. The catalysed reaction is a (3R)-hydroxyacyl-[ACP] + UDP-N-acetyl-alpha-D-glucosamine = a UDP-3-O-[(3R)-3-hydroxyacyl]-N-acetyl-alpha-D-glucosamine + holo-[ACP]. Its pathway is glycolipid biosynthesis; lipid IV(A) biosynthesis; lipid IV(A) from (3R)-3-hydroxytetradecanoyl-[acyl-carrier-protein] and UDP-N-acetyl-alpha-D-glucosamine: step 1/6. Functionally, involved in the biosynthesis of lipid A, a phosphorylated glycolipid that anchors the lipopolysaccharide to the outer membrane of the cell. This chain is Acyl-[acyl-carrier-protein]--UDP-N-acetylglucosamine O-acyltransferase, found in Pseudomonas fluorescens (strain SBW25).